The following is a 225-amino-acid chain: Ribonuclease 3 (225 aa).

The 127-residue stretch at 2 to 128 (LSTLIKKLKI…LFGAIYLDLG (127 aa)) folds into the RNase III domain. Residue Glu43 participates in Mg(2+) binding. Asp47 is a catalytic residue. 2 residues coordinate Mg(2+): Asn114 and Glu117. Glu117 is a catalytic residue. The 69-residue stretch at 152–220 (DFKTQLQELV…ARYVLNILSK (69 aa)) folds into the DRBM domain.

The protein belongs to the ribonuclease III family. As to quaternary structure, homodimer. Mg(2+) is required as a cofactor.

The protein resides in the cytoplasm. The catalysed reaction is Endonucleolytic cleavage to 5'-phosphomonoester.. Its function is as follows. Digests double-stranded RNA. Involved in the processing of primary rRNA transcript to yield the immediate precursors to the large and small rRNAs (23S and 16S). Processes some mRNAs, and tRNAs when they are encoded in the rRNA operon. Processes pre-crRNA and tracrRNA of type II CRISPR loci if present in the organism. This is Ribonuclease 3 from Phytoplasma mali (strain AT).